Reading from the N-terminus, the 224-residue chain is MEKMRVIVITVFLFIGAAIAEDVGIGLLSEAEAYVSPKLKKFITPCTSHVGETCSTTSSSGSEALMQNQGGLALCLFDSMERCLVDHGAQLYQTSVTNLQVEPSEVFPRKNNPQGGRKSKLDDHQVQPLSFRLPPFRLPPMPKLGPTSPIIRTIPSPPIAPRDLSLIETIQLRTALRTCTHVTARTCLTAPNVATSDLEACLTPSMNQCIYPRGAEYGSPPIRA.

A signal peptide spans 1-20 (MEKMRVIVITVFLFIGAAIA). The disordered stretch occupies residues 103-124 (PSEVFPRKNNPQGGRKSKLDDH).

Belongs to the nodulin 20 family.

Its function is as follows. Involved in the infection process during the plant-rhizobium interaction. This chain is Nodulin-C51, found in Glycine max (Soybean).